A 122-amino-acid chain; its full sequence is Urease subunit beta (122 aa).

The segment at aspartate 102–glutamine 122 is disordered.

Belongs to the urease beta subunit family. In terms of assembly, heterotrimer of UreA (gamma), UreB (beta) and UreC (alpha) subunits. Three heterotrimers associate to form the active enzyme.

Its subcellular location is the cytoplasm. The catalysed reaction is urea + 2 H2O + H(+) = hydrogencarbonate + 2 NH4(+). It functions in the pathway nitrogen metabolism; urea degradation; CO(2) and NH(3) from urea (urease route): step 1/1. This Paenarthrobacter aurescens (strain TC1) protein is Urease subunit beta.